Here is a 100-residue protein sequence, read N- to C-terminus: Urease subunit gamma (100 aa).

It belongs to the urease gamma subunit family. In terms of assembly, heterotrimer of UreA (gamma), UreB (beta) and UreC (alpha) subunits. Three heterotrimers associate to form the active enzyme.

Its subcellular location is the cytoplasm. The catalysed reaction is urea + 2 H2O + H(+) = hydrogencarbonate + 2 NH4(+). The protein operates within nitrogen metabolism; urea degradation; CO(2) and NH(3) from urea (urease route): step 1/1. The chain is Urease subunit gamma from Vibrio parahaemolyticus.